Reading from the N-terminus, the 367-residue chain is Otolith matrix protein 1 (367 aa).

A signal peptide spans 1 to 23 (MDRLDRRLAATLLLFSFISFSTQ). Residues 27 to 363 (ISWCVVSEAE…YTTVLQAFEC (337 aa)) enclose the Transferrin-like domain.

It belongs to the transferrin family. As to quaternary structure, interacts with OTOL1. As to expression, expressed in the sacculus during the day.

It localises to the secreted. In terms of biological role, required for normal otolith growth and deposition of otolin-1 in the otolith. This Oncorhynchus mykiss (Rainbow trout) protein is Otolith matrix protein 1 (otomp).